A 225-amino-acid polypeptide reads, in one-letter code: Membrane protein LapB (225 aa).

The protein to H.influenzae HI_1119.

It localises to the cell membrane. This chain is Membrane protein LapB (lapB), found in Mannheimia haemolytica (Pasteurella haemolytica).